Reading from the N-terminus, the 825-residue chain is MEGAGGENEKKKMSSERRKEKSRDAARSRRSKESEVFYELAHQLPLPHNVSSHLDKASVMRLTISYLRVRKLLDAGDLDIEDEMKAQMNCFYLKAPDGFVMVLTDDGDMIYISDNVNKYMGLTQFELTGHSVFDFTHPCDHEEMREMLTHRNGPVRKGKEQNTQRSFFLRMKCTLTSRGRTMNIKSATWKVLHCTGHIHVYDTSSNQPQCGYKKPPMTCLVLICEPIPHPSNIEIPLDSKTFLSRHSLDMKFSYCDERITELMGYEPEELLGRSIYEYYHALDSDHLTKTHHDMFTKGQVTTGQYRMLAKRGGYVWVETQATVIYNTKDSQPQCIVCVNYVVSGIIQHDLIFSLQQTESVLKPVESSDMKMTQLFTKVESEDTSCLFDKLKKEPDALTLLAPAAGDTIISLDFGSDDTETEDQQLEDVPLYNDVMFPSSNEKLNINLAMSPLPASETPKPLRSSADPALNQEVALKLESSPESLGLSFTMPQIQDQPASPSDGSTRQSSPEPNSPSEYCFDVDSDMVNVFKLELVEKLFAEDTEAKNPFSAQDTDLDLEMLAPYIPMDDDFQLRSFDQLSPLESNSPSPPSVSTVTGFQQTQLQKPTITVTAATATTATTTDESKAVTKDNIEDIKILIASPPSTQVPQEMTTAKASAYSGTHSRTASPDRAGKRVIEKTDKAHPRSLNLSVTLNQRNTVPEEELNPRTIALQNAQRKRKMEHDGSLFQAAGIGTLLQQPGDRAPTMSLSWKRVKGYISSEQDGMEQKTIFLIPSDLACRLLGQSMDESGLPQLTSYDCEVNAPIQGSRNLLQGEELLRALDQVN.

The interval 1 to 30 (MEGAGGENEKKKMSSERRKEKSRDAARSRR) is disordered. An interaction with TSGA10 region spans residues 1 to 401 (MEGAGGENEK…KEPDALTLLA (401 aa)). Residues 7–30 (ENEKKKMSSERRKEKSRDAARSRR) are compositionally biased toward basic and acidic residues. The bHLH domain maps to 17–70 (RRKEKSRDAARSRRSKESEVFYELAHQLPLPHNVSSHLDKASVMRLTISYLRVR). The tract at residues 21–30 (KSRDAARSRR) is DNA-binding. Positions 85-158 (KAQMNCFYLK…THRNGPVRKG (74 aa)) constitute a PAS 1 domain. Positions 170-191 (RMKCTLTSRGRTMNIKSATWKV) are required for heterodimer formation with ARNT. A PAS 2 domain is found at 228-298 (PHPSNIEIPL…KTHHDMFTKG (71 aa)). Ser247 carries the post-translational modification Phosphoserine; by CK1. The PAC domain maps to 302–345 (TGQYRMLAKRGGYVWVETQATVIYNTKDSQPQCIVCVNYVVSGI). The tract at residues 401-602 (APAAGDTIIS…STVTGFQQTQ (202 aa)) is ODD. Pro402 carries the post-translational modification 4-hydroxyproline. Residues 492 to 516 (QIQDQPASPSDGSTRQSSPEPNSPS) show a composition bias toward polar residues. Positions 492 to 520 (QIQDQPASPSDGSTRQSSPEPNSPSEYCF) are disordered. Residues 530–574 (FKLELVEKLFAEDTEAKNPFSAQDTDLDLEMLAPYIPMDDDFQLR) are NTAD. Lys531 bears the N6-acetyllysine; alternate mark. Residue Lys531 forms a Glycyl lysine isopeptide (Lys-Gly) (interchain with G-Cter in ubiquitin); alternate linkage. Glycyl lysine isopeptide (Lys-Gly) (interchain with G-Cter in ubiquitin) cross-links involve residues Lys537 and Lys546. Residue Ser550 is modified to Phosphoserine; by GSK3-beta. Thr554 carries the phosphothreonine; by GSK3-beta modification. The residue at position 563 (Pro563) is a 4-hydroxyproline. The residue at position 575 (Ser575) is a Phosphoserine; by PLK3. The tract at residues 575–784 (SFDQLSPLES…SDLACRLLGQ (210 aa)) is ID. Disordered stretches follow at residues 579–602 (LSPLESNSPSPPSVSTVTGFQQTQ) and 654–674 (AKASAYSGTHSRTASPDRAGK). Ser588 is subject to Phosphoserine; by GSK3-beta. Residues 654–667 (AKASAYSGTHSRTA) are compositionally biased toward polar residues. Phosphoserine; by PLK3 is present on Ser657. A Nuclear localization signal motif is present at residues 717–721 (RKRKM). The interval 785-825 (SMDESGLPQLTSYDCEVNAPIQGSRNLLQGEELLRALDQVN) is CTAD. S-nitrosocysteine is present on Cys799. Asn802 bears the (3S)-3-hydroxyasparagine mark.

In terms of assembly, interacts with the ARNT; forms a heterodimer that binds core DNA sequence 5'-TACGTG-3' within the hypoxia response element (HRE) of target gene promoters. Interacts with COPS5; the interaction increases the transcriptional activity of HIF1A through increased stability. Interacts with EP300 (via TAZ-type 1 domains); the interaction is stimulated in response to hypoxia and inhibited by CITED2. Interacts with CREBBP (via TAZ-type 1 domains). Interacts with NCOA1, NCOA2, APEX1 and HSP90. Interacts (hydroxylated within the ODD domain) with VHLL (via beta domain); the interaction, leads to polyubiquitination and subsequent HIF1A proteasomal degradation. During hypoxia, sumoylated HIF1A also binds VHL; the interaction promotes the ubiquitination of HIF1A. Interacts with SENP1; the interaction desumoylates HIF1A resulting in stabilization and activation of transcription. Interacts (via the ODD domain) with NAA10; the interaction appears not to acetylate HIF1A nor have any affect on protein stability, during hypoxia. Interacts with RWDD3; the interaction enhances HIF1A sumoylation. Interacts with TSGA10. Interacts with HIF3A. Interacts with RORA (via the DNA binding domain); the interaction enhances HIF1A transcription under hypoxia through increasing protein stability. Interaction with PSMA7 inhibits the transactivation activity of HIF1A under both normoxic and hypoxia-mimicking conditions. Interacts with USP20. Interacts with RACK1; promotes HIF1A ubiquitination and proteasome-mediated degradation. Interacts (via N-terminus) with USP19. Interacts with SIRT2. Interacts (deacetylated form) with EGLN1. Interacts with CBFA2T3. Interacts with HSP90AA1 and HSP90AB1. Interacts with DCUN1D1; this interaction increases the interaction between VHL and DCUN1D1. Interacts with HIF1AN. Post-translationally, S-nitrosylation of Cys-799 may be responsible for increased recruitment of p300 coactivator necessary for transcriptional activity of HIF-1 complex. Acetylation of Lys-531 by ARD1 increases interaction with VHL and stimulates subsequent proteasomal degradation. Deacetylated by SIRT2 increases its interaction with and hydroxylation by EGLN1 thereby inactivating HIF1A activity by inducing its proteasomal degradation. In terms of processing, ubiquitinated; in normoxia, following hydroxylation and interaction with VHL. Lys-531 appears to be the principal site of ubiquitination. Clioquinol, the Cu/Zn-chelator, inhibits ubiquitination through preventing hydroxylation at Asn-802. Ubiquitinated by E3 ligase VHL. Deubiquitinated by UCHL1. Post-translationally, requires phosphorylation for DNA-binding. Phosphorylation at Ser-247 by CSNK1D/CK1 represses kinase activity and impairs ARNT binding. Phosphorylation by GSK3-beta and PLK3 promote degradation by the proteasome. The iron and 2-oxoglutarate dependent 3-hydroxylation of asparagine is (S) stereospecific within HIF CTAD domains. In terms of processing, sumoylated; with SUMO1 under hypoxia. Sumoylation is enhanced through interaction with RWDD3. Both sumoylation and desumoylation seem to be involved in the regulation of its stability during hypoxia. Sumoylation can promote either its stabilization or its VHL-dependent degradation by promoting hydroxyproline-independent HIF1A-VHL complex binding, thus leading to HIF1A ubiquitination and proteasomal degradation. Desumoylation by SENP1 increases its stability amd transcriptional activity. There is a disaccord between various publications on the effect of sumoylation and desumoylation on its stability and transcriptional activity. Post-translationally, in normoxia, is hydroxylated on Pro-402 and Pro-563 in the oxygen-dependent degradation domain (ODD) by EGLN1/PHD2 and EGLN2/PHD1. EGLN3/PHD3 has also been shown to hydroxylate Pro-563. The hydroxylated prolines promote interaction with VHL, initiating rapid ubiquitination and subsequent proteasomal degradation. Deubiquitinated by USP20. Under hypoxia, proline hydroxylation is impaired and ubiquitination is attenuated, resulting in stabilization. In normoxia, is hydroxylated on Asn-802 by HIF1AN, thus abrogating interaction with CREBBP and EP300 and preventing transcriptional activation. Repressed by iron ion, via Fe(2+) prolyl hydroxylase (PHD) enzymes-mediated hydroxylation and subsequent proteasomal degradation. In terms of tissue distribution, expressed in the kidney, higher expression is seen in the renal medulla than in the cortex. Expressed also in the perivenous zone of the liver.

Its subcellular location is the cytoplasm. The protein resides in the nucleus. It is found in the nucleus speckle. Its activity is regulated as follows. Induced by reactive oxygen species (ROS). Its function is as follows. Functions as a master transcriptional regulator of the adaptive response to hypoxia. Under hypoxic conditions, activates the transcription of over 40 genes, including erythropoietin, glucose transporters, glycolytic enzymes, vascular endothelial growth factor, HILPDA, and other genes whose protein products increase oxygen delivery or facilitate metabolic adaptation to hypoxia. Plays an essential role in embryonic vascularization, tumor angiogenesis and pathophysiology of ischemic disease. Heterodimerizes with ARNT; heterodimer binds to core DNA sequence 5'-TACGTG-3' within the hypoxia response element (HRE) of target gene promoters. Activation requires recruitment of transcriptional coactivators such as CREBBP and EP300. Activity is enhanced by interaction with NCOA1 and/or NCOA2. Interaction with redox regulatory protein APEX1 seems to activate CTAD and potentiates activation by NCOA1 and CREBBP. Involved in the axonal distribution and transport of mitochondria in neurons during hypoxia. The polypeptide is Hypoxia-inducible factor 1-alpha (Hif1a) (Rattus norvegicus (Rat)).